The primary structure comprises 359 residues: Peptide chain release factor 1 (359 aa).

N5-methylglutamine is present on Q236.

Belongs to the prokaryotic/mitochondrial release factor family. Methylated by PrmC. Methylation increases the termination efficiency of RF1.

The protein localises to the cytoplasm. Peptide chain release factor 1 directs the termination of translation in response to the peptide chain termination codons UAG and UAA. This chain is Peptide chain release factor 1, found in Streptococcus mutans serotype c (strain ATCC 700610 / UA159).